A 1197-amino-acid polypeptide reads, in one-letter code: DNA-directed RNA polymerase subunit beta (1197 aa).

Positions Gln-581–Val-597 are enriched in polar residues. 2 disordered regions span residues Gln-581–Asp-603 and Glu-1172–Val-1197.

The protein belongs to the RNA polymerase beta chain family. The RNAP catalytic core consists of 2 alpha, 1 beta, 1 beta' and 1 omega subunit. When a sigma factor is associated with the core the holoenzyme is formed, which can initiate transcription.

The catalysed reaction is RNA(n) + a ribonucleoside 5'-triphosphate = RNA(n+1) + diphosphate. DNA-dependent RNA polymerase catalyzes the transcription of DNA into RNA using the four ribonucleoside triphosphates as substrates. In Oenococcus oeni (strain ATCC BAA-331 / PSU-1), this protein is DNA-directed RNA polymerase subunit beta.